We begin with the raw amino-acid sequence, 103 residues long: Small ribosomal subunit protein uS10 (103 aa).

The protein belongs to the universal ribosomal protein uS10 family. Part of the 30S ribosomal subunit.

Functionally, involved in the binding of tRNA to the ribosomes. The polypeptide is Small ribosomal subunit protein uS10 (Xanthomonas campestris pv. campestris (strain B100)).